We begin with the raw amino-acid sequence, 221 residues long: Mitochondrial cardiolipin hydrolase (221 aa).

At 1–4 (MGRS) the chain is on the mitochondrial intermembrane side. Positions 1-38 (MGRSSWRLVFAAGAGLALALEALPWLMRWLLAGRRPRR) are required for mitochondrial localization. The chain crosses the membrane as a helical span at residues 5-27 (SWRLVFAAGAGLALALEALPWLM). Residues 28–221 (RWLLAGRRPR…SFFPQKHRGH (194 aa)) are Cytoplasmic-facing. A C3H1-type; atypical zinc finger spans residues 44 to 75 (PSQVTCTEALLQAPGLPPGPSGCPCSLPHSES). Residues 148–175 (DLGYMHHKFAIVDKKVLITGSLNWTTQA) enclose the PLD phosphodiesterase domain. Catalysis depends on residues H153, K155, and D160.

This sequence belongs to the phospholipase D family. MitoPLD/Zucchini subfamily. As to quaternary structure, homodimer. Interacts with MOV10L1. Interacts with MIGA1 and MIGA2; possibly facilitating homodimer formation. Interacts with GK2. Predominantly expressed in testis (at protein level) and in growing ovary. Also expressed in the brain, eye and urinary bladder (at protein level), but its levels were low or undetectable in other organs.

It localises to the mitochondrion outer membrane. It is found in the nucleus membrane. The protein resides in the cell membrane. The protein localises to the golgi apparatus. It carries out the reaction a cardiolipin + H2O = a 1,2-diacyl-sn-glycero-3-phospho-(1'-sn-glycerol) + a 1,2-diacyl-sn-glycero-3-phosphate + H(+). Single stranded DNA (ssDNA) hydrolase activity does not depend upon, but is stimulated by the presence of Ca(2+) and Mn(2+). MIGA1 and MIGA2 increase PLD6 self-association affinity and affects the homodimer conformation facilitating its phospholipase activity over the nuclease activity. MYC induces its expression and stimulates its phospholipase activity. In terms of biological role, presents phospholipase and nuclease activities, depending on the different physiological conditions. Interaction with Mitoguardin (MIGA1 or MIGA2) affects the dimer conformation, facilitating the lipase activity over the nuclease activity. Plays a key role in mitochondrial fusion and fission via its phospholipase activity. In its phospholipase role, it uses the mitochondrial lipid cardiolipin as substrate to generate phosphatidate (PA or 1,2-diacyl-sn-glycero-3-phosphate), a second messenger signaling lipid. Production of PA facilitates Mitofusin-mediated fusion, whereas the cleavage of PA by the Lipin family of phosphatases produces diacylgycerol (DAG) which promotes mitochondrial fission. Both Lipin and DAG regulate mitochondrial dynamics and membrane fusion/fission, important processes for adapting mitochondrial metabolism to changes in cell physiology. Mitochondrial fusion enables cells to cope with the increased nucleotide demand during DNA synthesis. Mitochondrial function and dynamics are closely associated with biological processes such as cell growth, proliferation, and differentiation. Mediator of MYC activity, promotes mitochondrial fusion and activates AMPK which in turn inhibits YAP/TAZ, thereby inducing cell growth and proliferation. The endonuclease activity plays a critical role in PIWI-interacting RNA (piRNA) biogenesis during spermatogenesis. Implicated in spermatogenesis and sperm fertility in testicular germ cells, its single strand-specific nuclease activity is critical for the biogenesis/maturation of PIWI-interacting RNA (piRNA). MOV10L1 selectively binds to piRNA precursors and funnels them to the endonuclease that catalyzes the first cleavage step of piRNA processing to generate piRNA intermediate fragments that are subsequently loaded to Piwi proteins. Cleaves either DNA or RNA substrates with similar affinity, producing a 5' phosphate end, in this way it participates in the processing of primary piRNA transcripts. piRNAs provide essential protection against the activity of mobile genetic elements. piRNA-mediated transposon silencing is thus critical for maintaining genome stability, in particular in germline cells when transposons are mobilized as a consequence of wide-spread genomic demethylation. PA may act as signaling molecule in the recognition/transport of the precursor RNAs of primary piRNAs. Interacts with tesmin in testes, suggesting a role in spermatogenesis via association with its interacting partner. The sequence is that of Mitochondrial cardiolipin hydrolase (Pld6) from Mus musculus (Mouse).